Here is a 280-residue protein sequence, read N- to C-terminus: Phosphatidylglycerol--prolipoprotein diacylglyceryl transferase (280 aa).

The next 4 helical transmembrane spans lie at 26 to 46 (LAIHWYGIAYVAGIMLGWFYA), 71 to 91 (FILWAAGGIVLGGRIGYILFY), 106 to 126 (IWNGGMSFHGGLIGTTIAMIL), and 132 to 152 (GIPVWSMFDIIAAVAPIGLLF). Arg-154 contributes to the a 1,2-diacyl-sn-glycero-3-phospho-(1'-sn-glycerol) binding site. A run of 3 helical transmembrane segments spans residues 193–213 (GLEGLVLVVLLAIAIYVFKAL), 217–237 (GTVTGIFVCGYALSRIFVEFF), and 251–271 (WLTMGMVLSTPMFLLGLWAVL).

Belongs to the Lgt family.

Its subcellular location is the cell inner membrane. It carries out the reaction L-cysteinyl-[prolipoprotein] + a 1,2-diacyl-sn-glycero-3-phospho-(1'-sn-glycerol) = an S-1,2-diacyl-sn-glyceryl-L-cysteinyl-[prolipoprotein] + sn-glycerol 1-phosphate + H(+). Its pathway is protein modification; lipoprotein biosynthesis (diacylglyceryl transfer). Catalyzes the transfer of the diacylglyceryl group from phosphatidylglycerol to the sulfhydryl group of the N-terminal cysteine of a prolipoprotein, the first step in the formation of mature lipoproteins. In Agrobacterium fabrum (strain C58 / ATCC 33970) (Agrobacterium tumefaciens (strain C58)), this protein is Phosphatidylglycerol--prolipoprotein diacylglyceryl transferase.